We begin with the raw amino-acid sequence, 251 residues long: Triosephosphate isomerase (251 aa).

Residue N9–K11 coordinates substrate. The Electrophile role is filled by H95. E167 acts as the Proton acceptor in catalysis. Substrate contacts are provided by residues G173, S213, and G234–G235.

The protein belongs to the triosephosphate isomerase family. Homodimer.

Its subcellular location is the cytoplasm. The enzyme catalyses D-glyceraldehyde 3-phosphate = dihydroxyacetone phosphate. Its pathway is carbohydrate biosynthesis; gluconeogenesis. The protein operates within carbohydrate degradation; glycolysis; D-glyceraldehyde 3-phosphate from glycerone phosphate: step 1/1. Involved in the gluconeogenesis. Catalyzes stereospecifically the conversion of dihydroxyacetone phosphate (DHAP) to D-glyceraldehyde-3-phosphate (G3P). The polypeptide is Triosephosphate isomerase (Latilactobacillus sakei subsp. sakei (strain 23K) (Lactobacillus sakei subsp. sakei)).